Reading from the N-terminus, the 501-residue chain is Protein disulfide isomerase-like 1-1 (501 aa).

Residues 1–23 (MAMRGFTLFSILVLSLCASSIRS) form the signal peptide. A Thioredoxin 1 domain is found at 24–141 (EETETKEFVL…IVTYLKKQSG (118 aa)). N-linked (GlcNAc...) asparagine glycosylation is present at N39. Catalysis depends on nucleophile residues C59 and C62. A disulfide bridge connects residues C59 and C62. Residue N275 is glycosylated (N-linked (GlcNAc...) asparagine). The Thioredoxin 2 domain occupies 354 to 482 (FKDGKIAPHK…FISFVDKNKD (129 aa)). Active-site nucleophile residues include C404 and C407. A disulfide bridge connects residues C404 and C407. The Prevents secretion from ER signature appears at 498–501 (KDEL).

It belongs to the protein disulfide isomerase family. As to quaternary structure, interacts with RD21A, At3g19390, At5g43060. As to expression, highly expressed in flowers, stems and immature seeds, and at lower levels in leaves and siliques (at protein level).

It is found in the endoplasmic reticulum lumen. The protein localises to the vacuole. The catalysed reaction is Catalyzes the rearrangement of -S-S- bonds in proteins.. Functionally, protein disulfide isomerase that associates with RD21A protease for trafficking from the ER through the Golgi to lytic and protein storage vacuoles of endothelial cells in developing seeds. Regulates the timing of programmed cell death (PCD) of the endothelial cells by chaperoning and inhibiting cysteine proteases during their trafficking to vacuoles. The polypeptide is Protein disulfide isomerase-like 1-1 (PDIL1-1) (Arabidopsis thaliana (Mouse-ear cress)).